Consider the following 391-residue polypeptide: MFDYSIFAKEIDELKNQGLYTYIRTLESPQGAWLVIDGKKVLNLCSNNYLGFANEERLKNAAKQAVEKWGVGPGAVRTIAGTFSLHNELEETLAKFKKVEATIFLQSGFVANQAVIPAITNEEDAILSDELNHASIIDGVRLSKAKRFVWKHRDIKDLEEKLKEAKDARRKLIITDGVFSMDGDLAPLPEIVELAEKYNAMVMVDDAHGEGVLGSHGRGIVDHFGLHGRVDIEIGTLSKAFGVLGGYIAGKKELIDYLKQKARPFLFSSPLSPADTAAALEATKILQESDERVKRLWDNAKYFKEEMKKLGFDTGESETPITPVMLYDAKLSTQFSKELFEEGIFAQSIGYPTVPKGKARIRVMISAVHTKEDLDFALEKFEKVGKKLGVI.

A pyridoxal 5'-phosphate-binding site is contributed by 108-109; that stretch reads GF. His-133 contributes to the substrate binding site. Residues Ser-180, His-208, and Thr-236 each contribute to the pyridoxal 5'-phosphate site. Lys-239 carries the post-translational modification N6-(pyridoxal phosphate)lysine. Thr-353 contributes to the substrate binding site.

The protein belongs to the class-II pyridoxal-phosphate-dependent aminotransferase family. BioF subfamily. As to quaternary structure, homodimer. Requires pyridoxal 5'-phosphate as cofactor.

The catalysed reaction is 6-carboxyhexanoyl-[ACP] + L-alanine + H(+) = (8S)-8-amino-7-oxononanoate + holo-[ACP] + CO2. It participates in cofactor biosynthesis; biotin biosynthesis. In terms of biological role, catalyzes the decarboxylative condensation of pimeloyl-[acyl-carrier protein] and L-alanine to produce 8-amino-7-oxononanoate (AON), [acyl-carrier protein], and carbon dioxide. The polypeptide is 8-amino-7-oxononanoate synthase (Thermosipho melanesiensis (strain DSM 12029 / CIP 104789 / BI429)).